The chain runs to 334 residues: Putative transport protein MJ1177 (334 aa).

The next 7 helical transmembrane spans lie at 13 to 33 (VIVG…DVLA), 61 to 81 (LAIS…LLTF), 138 to 158 (IIDV…TFYF), 191 to 211 (SYKN…ILSY), 234 to 254 (LLPI…FFLI), 259 to 279 (KAVF…DFVI), and 293 to 313 (VLVV…GFAI).

This sequence belongs to the autoinducer-2 exporter (AI-2E) (TC 2.A.86) family.

The protein resides in the cell membrane. This chain is Putative transport protein MJ1177, found in Methanocaldococcus jannaschii (strain ATCC 43067 / DSM 2661 / JAL-1 / JCM 10045 / NBRC 100440) (Methanococcus jannaschii).